The following is a 500-amino-acid chain: MELSYQEKLTLIKLNELKKAKFDELVEKTGLDQVAVMRAVLWLQSKGLARLHEKSERIAKLTETGKKYAQIGLPEWRALKVLRKKGKVTLDDLKEVLSEDELKPIVGLLRKEGWASIRKEDGKLVLEITENGLKAEERAIDRALKLLAEKEAIPVSEIEEIIKVNDLKRRKIAEEDIVTERTVEITPEGEELANKGLELKEEVSTLTPELIKSGKWREVEFKRFNIQAPVRRIYPGKKQPYRAFLDKIRRRLIEMGFIEMTVDSLIETQFWNFDALFQPQNHPAREWTDTYQLKYPKSGYLPNKELVERVKTAHERGLAGSRGWGYVWSPERAMLLMPRAHGTALSGRQLAKGVEIPGKYFTIQRVFRPDVLDRTHLIEFNQVDGFVVGEDLNFRHLLGILKRFAVEIAGAKKVKFLPDYYPFTEPSVQMSAYHPELGWVEFGGAGIFREEMTRALGIDVPVIAWGIGIDRLAMFKLGIDDIRYLFSYDLGWLREARLVW.

L-phenylalanine-binding positions include Thr-343, 382-384, and Phe-423; that span reads QVD. Glu-425 provides a ligand contact to Mg(2+). Phe-448 contacts L-phenylalanine.

It belongs to the class-II aminoacyl-tRNA synthetase family. Phe-tRNA synthetase alpha subunit type 2 subfamily. Tetramer of two alpha and two beta subunits. Mg(2+) serves as cofactor.

The protein localises to the cytoplasm. It catalyses the reaction tRNA(Phe) + L-phenylalanine + ATP = L-phenylalanyl-tRNA(Phe) + AMP + diphosphate + H(+). In Thermococcus onnurineus (strain NA1), this protein is Phenylalanine--tRNA ligase alpha subunit.